Reading from the N-terminus, the 580-residue chain is F-box only protein 24 (580 aa).

In terms of domain architecture, F-box spans 36 to 82; it reads PISIQLFPPELVEHIISFLPVRDLVALGQTCRYFHEVCDAEGVWRRI. The RCC1 repeat unit spans residues 376–425; that stretch reads GRIFMQGNNRYGQLGTGDKMDRGEPTQVRYLQRPITLWCGLNHSLVLSQS.

As to quaternary structure, directly interacts with SKP1 and CUL1.

Its function is as follows. Substrate-recognition component of the SCF (SKP1-CUL1-F-box protein)-type E3 ubiquitin ligase complex. This Macaca fascicularis (Crab-eating macaque) protein is F-box only protein 24 (FBXO24).